The following is a 62-amino-acid chain: Conotoxin Pn-014 (62 aa).

Positions 1–22 are cleaved as a signal peptide; it reads MRCLPVFVILLLLIASAPSVDA. A propeptide spanning residues 23–48 is cleaved from the precursor; it reads RPKTKDDIPLVSFQDHAKRILQTFES. Tryptophan 61 bears the Tryptophan amide mark.

Belongs to the conotoxin T superfamily. In terms of processing, contains 2 disulfide bonds that can be either 'C1-C3, C2-C4' or 'C1-C4, C2-C3', since these disulfide connectivities have been observed for conotoxins with cysteine framework V (for examples, see AC P0DQQ7 and AC P81755). As to expression, expressed by the venom duct.

Its subcellular location is the secreted. This is Conotoxin Pn-014 from Conus pennaceus (Feathered cone).